We begin with the raw amino-acid sequence, 79 residues long: MSTKKSPEELKRIFEKYAAKEGDPDQLSKDELKLLIQAEFPSLLKGPNTLDDLFQELDKNGDGEVSFEEFQVLVKKISQ.

At Ser-2 the chain carries N-acetylserine. 2 consecutive EF-hand domains span residues 13–48 (IFEK…KGPN) and 45–79 (KGPN…KISQ). The Ca(2+) site is built by Gln-26 and Glu-31. Ser-42 bears the Phosphoserine mark. 5 residues coordinate Ca(2+): Asp-58, Asn-60, Asp-62, Glu-64, and Glu-69.

Belongs to the S-100 family.

The sequence is that of Protein S100-G (S100G) from Homo sapiens (Human).